We begin with the raw amino-acid sequence, 61 residues long: Protein transport protein Sec61 subunit beta (61 aa).

Over 1–35 the chain is Cytoplasmic; that stretch reads MKRPSTQRAPATVNKGGNSMMKFYSEDAIGLKVGP. The chain crosses the membrane as a helical span at residues 36 to 56; that stretch reads TAVLFMSLIFIAFVIILHIMG. Residues 57–61 are Extracellular-facing; that stretch reads KYTRS.

The protein belongs to the SEC61-beta family. As to quaternary structure, the SEC61 channel-forming translocon complex.

The protein localises to the endoplasmic reticulum membrane. Its function is as follows. Component of SEC61 channel-forming translocon complex that mediates transport of signal peptide-containing precursor polypeptides across the endoplasmic reticulum (ER). Forms a ribosome receptor and a gated pore in the ER membrane, both functions required for cotranslational translocation of nascent polypeptides. This Dictyostelium discoideum (Social amoeba) protein is Protein transport protein Sec61 subunit beta (sec61b).